A 37-amino-acid chain; its full sequence is uncharacterized protein (37 aa).

Belongs to the poxviridae A56.5 protein family.

This is an uncharacterized protein from Vaccinia virus (strain Western Reserve) (VACV).